A 130-amino-acid chain; its full sequence is uncharacterized protein (130 aa).

The next 2 membrane-spanning stretches (helical) occupy residues 35-57 and 72-91; these read FLIT…FISL and IVFF…LLLL.

It is found in the cell membrane. This is an uncharacterized protein from Pasteurella multocida (strain Pm70).